We begin with the raw amino-acid sequence, 356 residues long: Chavicol O-methyltransferase (356 aa).

S-adenosyl-L-methionine contacts are provided by Gly202, Asp225, Asp245, Met246, and Lys259. The Proton acceptor role is filled by His263.

The protein belongs to the class I-like SAM-binding methyltransferase superfamily. Cation-independent O-methyltransferase family. COMT subfamily. Homodimer. In terms of tissue distribution, specifically expressed in the peltate glandular trichomes on the surface of the young basil leaves.

It carries out the reaction (E)-isoeugenol + S-adenosyl-L-methionine = (E)-isomethyleugenol + S-adenosyl-L-homocysteine + H(+). It participates in aromatic compound metabolism; phenylpropanoid biosynthesis. Functionally, phenylpropene O-methyltransferase that catalyzes the methylation of the para-4-hydroxyl of chavicol to methylchavicol. Can also convert eugenol to methyleugenol but with less affinity. This is Chavicol O-methyltransferase (CVOMT1) from Ocimum basilicum (Sweet basil).